A 954-amino-acid chain; its full sequence is cGMP-specific 3',5'-cyclic phosphodiesterase alpha (954 aa).

Residues 1–259 are Cytoplasmic-facing; sequence MMDTKVDQTI…NTFYSSFPFK (259 aa). A helical membrane pass occupies residues 260-280; it reads LFLHSLYMIFICFIYFVVLYF. Topologically, residues 281 to 296 are extracellular; sequence MLLKKIYTHPFIFHLS. The chain crosses the membrane as a helical span at residues 297–317; the sequence is VLKFLFDIIFFLSFILYPLFL. Over 318–327 the chain is Cytoplasmic; sequence RLKRIDKIIY. A helical membrane pass occupies residues 328-348; it reads SSYISSYIFVCVTFLYSFIIF. The Extracellular segment spans residues 349–365; that stretch reads KCSSYSVKMNSNTYQNN. Residues 366–386 traverse the membrane as a helical segment; the sequence is FVFQNMLFLLINIIYICIFCF. Residues 387–401 lie on the Cytoplasmic side of the membrane; that stretch reads LKNYMILYSFLYNCR. Residues 402–422 traverse the membrane as a helical segment; the sequence is FSIFCILFIFLYYYLFFSLDF. The Extracellular portion of the chain corresponds to 423-432; it reads YRIIHLPLDN. The helical transmembrane segment at 433-453 threads the bilayer; it reads FFFPFLCFLFFSFLFIFKIIM. Residues 454 to 954 lie on the Cytoplasmic side of the membrane; it reads SLYYEYVYEK…LSKLELIKFE (501 aa). In terms of domain architecture, PDEase spans 586-930; the sequence is NQEETKSFLS…ERWESHKNDN (345 aa). His680 acts as the Proton donor in catalysis. 680 to 684 serves as a coordination point for 3',5'-cyclic GMP; the sequence is HTSLH. Zn(2+) contacts are provided by His684, His720, Asp721, and Asp832. 3',5'-cyclic GMP-binding residues include Asp721, Asp832, and Gln884. Residue Asp721 participates in Mg(2+) binding.

The protein belongs to the cyclic nucleotide phosphodiesterase family. The cofactor is Zn(2+). Mg(2+) is required as a cofactor.

It localises to the membrane. It catalyses the reaction 3',5'-cyclic GMP + H2O = GMP + H(+). It participates in purine metabolism; 3',5'-cyclic GMP degradation; GMP from 3',5'-cyclic GMP: step 1/1. With respect to regulation, not inhibited by cAMP. Inhibited by zaprinast. Its function is as follows. Specifically hydrolyzes the second messenger cGMP, which is a key regulator of many important physiological processes. This chain is cGMP-specific 3',5'-cyclic phosphodiesterase alpha, found in Plasmodium falciparum (isolate 3D7).